The following is a 148-amino-acid chain: Single-stranded DNA-binding protein, mitochondrial (148 aa).

The N-terminal 16 residues, 1–16, are a transit peptide targeting the mitochondrion; sequence MFRRPVLQVLRQFVRH. Positions 30 to 141 constitute an SSB domain; it reads LNRVHLLGRV…IIADNIIFLS (112 aa). Residues S67 and S79 each carry the phosphoserine modification. K113 is subject to N6-acetyllysine. An N6-succinyllysine modification is found at K122.

Homotetramer. Interacts with MPG/AAG, through inhibition of its glycosylase activity it potentially prevents formation of DNA breaks in ssDNA, ensuring that base removal primarily occurs in dsDNA. Interacts with POLDIP2. Interacts with PRIMPOL.

It localises to the mitochondrion. It is found in the mitochondrion matrix. The protein resides in the mitochondrion nucleoid. Functionally, binds preferentially and cooperatively to pyrimidine rich single-stranded DNA (ss-DNA). In vitro, required to maintain the copy number of mitochondrial DNA (mtDNA) and plays a crucial role during mtDNA replication by stimulating the activity of the replisome components POLG and TWNK at the replication fork. Promotes the activity of the gamma complex polymerase POLG, largely by organizing the template DNA and eliminating secondary structures to favor ss-DNA conformations that facilitate POLG activity. In addition it is able to promote the 5'-3' unwinding activity of the mtDNA helicase TWNK. May also function in mtDNA repair. This chain is Single-stranded DNA-binding protein, mitochondrial (SSBP1), found in Pongo abelii (Sumatran orangutan).